The chain runs to 644 residues: Acetolactate synthase 1, chloroplastic (644 aa).

Residues 1–43 constitute a chloroplast transit peptide; sequence MATTAAAAAAALSAAATAKTGRKNHQRHHVLPARGRVGAAAVR. Residues 47-67 are disordered; the sequence is VSPVTPPSPAPPATPLRPWGP. A compositionally biased stretch (pro residues) spans 50 to 61; sequence VTPPSPAPPATP. A thiamine diphosphate-binding site is contributed by Glu-118. A disulfide bridge connects residues Cys-138 and Cys-284. Residues Arg-220, 326-347, and 369-388 contribute to the FAD site; these read HGTV…FGVR and DIDP…ICAD. A thiamine pyrophosphate binding region spans residues 461-541; the sequence is QHQMWAAQYY…VKVMVLNNQH (81 aa). The Mg(2+) site is built by Asp-512 and Asn-539.

Belongs to the TPP enzyme family. Mg(2+) is required as a cofactor. Thiamine diphosphate serves as cofactor.

The protein resides in the plastid. It is found in the chloroplast. It carries out the reaction 2 pyruvate + H(+) = (2S)-2-acetolactate + CO2. Its pathway is amino-acid biosynthesis; L-isoleucine biosynthesis; L-isoleucine from 2-oxobutanoate: step 1/4. The protein operates within amino-acid biosynthesis; L-valine biosynthesis; L-valine from pyruvate: step 1/4. The chain is Acetolactate synthase 1, chloroplastic (ALS1) from Oryza sativa subsp. japonica (Rice).